We begin with the raw amino-acid sequence, 345 residues long: UDP-3-O-acylglucosamine N-acyltransferase (345 aa).

His-239 (proton acceptor) is an active-site residue.

Belongs to the transferase hexapeptide repeat family. LpxD subfamily. As to quaternary structure, homotrimer.

It carries out the reaction a UDP-3-O-[(3R)-3-hydroxyacyl]-alpha-D-glucosamine + a (3R)-hydroxyacyl-[ACP] = a UDP-2-N,3-O-bis[(3R)-3-hydroxyacyl]-alpha-D-glucosamine + holo-[ACP] + H(+). It participates in bacterial outer membrane biogenesis; LPS lipid A biosynthesis. In terms of biological role, catalyzes the N-acylation of UDP-3-O-acylglucosamine using 3-hydroxyacyl-ACP as the acyl donor. Is involved in the biosynthesis of lipid A, a phosphorylated glycolipid that anchors the lipopolysaccharide to the outer membrane of the cell. The chain is UDP-3-O-acylglucosamine N-acyltransferase from Geobacter metallireducens (strain ATCC 53774 / DSM 7210 / GS-15).